The primary structure comprises 718 residues: Zinc finger protein 39 (718 aa).

A KRAB domain is found at 59–130; it reads VSFEDVSVDF…EDVPKQSRAD (72 aa). The C2H2-type 1 zinc-finger motif lies at 298–320; it reads FECSICKKTFCTKCELMKHKKIH. The segment at 353 to 375 adopts a C2H2-type 2; degenerate zinc-finger fold; that stretch reads HRCKQCEKCFHQKNQQNVHERVP. C2H2-type zinc fingers lie at residues 409–431, 437–459, 465–487, 493–515, 521–543, 549–571, 577–599, 605–627, 633–655, 661–683, and 689–711; these read YGCNLCGKAFYRKSHLGRHQKIH, YGCEECKKTFYHKSSLTIHQRTH, YECKKCRKTFYCKSDLNVHHRTH, YECDECRKTFYSKSHLVIHQKVH, YECEECQKAFSRKSNLTVHQKTH, YECNVCGKTFHRQSHLNMHQGTH, YQCEECGKAFYQKSSLRRHQRNH, YACEECRKTFLHKSSLTVHQRSH, YSCEECRKTFYSKSHLTVHQRTH, YECKLCKKAFHQKSYLNRHQVTH, and FECQECRKTFYHKSSLTVHQRIH.

As to expression, predominantly in the spermatocytes and spermatids of testes.

Its subcellular location is the nucleus. A putative DNA-binding regulatory protein associated with meiosis in spermatogenesis. The chain is Zinc finger protein 39 (Zfp39) from Mus musculus (Mouse).